The primary structure comprises 121 residues: Large ribosomal subunit protein uL18 (121 aa).

The protein belongs to the universal ribosomal protein uL18 family. In terms of assembly, part of the 50S ribosomal subunit; part of the 5S rRNA/L5/L18/L25 subcomplex. Contacts the 5S and 23S rRNAs.

In terms of biological role, this is one of the proteins that bind and probably mediate the attachment of the 5S RNA into the large ribosomal subunit, where it forms part of the central protuberance. The polypeptide is Large ribosomal subunit protein uL18 (Albidiferax ferrireducens (strain ATCC BAA-621 / DSM 15236 / T118) (Rhodoferax ferrireducens)).